A 167-amino-acid polypeptide reads, in one-letter code: Phosphopantetheine adenylyltransferase (167 aa).

Threonine 9 serves as a coordination point for substrate. ATP-binding positions include 9-10 (TF) and histidine 17. Residues lysine 41, leucine 73, and arginine 87 each coordinate substrate. ATP is bound by residues 88 to 90 (GLR), glutamate 98, and 123 to 129 (YQFISGT).

The protein belongs to the bacterial CoaD family. As to quaternary structure, homohexamer. Mg(2+) serves as cofactor.

It localises to the cytoplasm. It catalyses the reaction (R)-4'-phosphopantetheine + ATP + H(+) = 3'-dephospho-CoA + diphosphate. Its pathway is cofactor biosynthesis; coenzyme A biosynthesis; CoA from (R)-pantothenate: step 4/5. In terms of biological role, reversibly transfers an adenylyl group from ATP to 4'-phosphopantetheine, yielding dephospho-CoA (dPCoA) and pyrophosphate. This is Phosphopantetheine adenylyltransferase from Bordetella avium (strain 197N).